Here is a 471-residue protein sequence, read N- to C-terminus: Putative multidrug resistance protein MdtD (471 aa).

The next 13 membrane-spanning stretches (helical) occupy residues 12–32 (LWIV…VNTA), 49–69 (MVVV…GWLA), 77–97 (IFFT…WSST), 102–124 (VLAR…LTVM), 138–158 (FVTL…GILV), 165–185 (WIFL…LMLM), 197–217 (LSGF…LDGS), 222–242 (LSPL…ALYL), 263–283 (FSLG…LPFM), 286–306 (VFLQ…MIPM), 342–362 (LLFM…VLFL), 396–416 (MIMQ…LGMF), and 431–451 (VFMY…LIFA).

Belongs to the major facilitator superfamily. TCR/Tet family.

The protein resides in the cell inner membrane. This chain is Putative multidrug resistance protein MdtD, found in Citrobacter koseri (strain ATCC BAA-895 / CDC 4225-83 / SGSC4696).